A 391-amino-acid chain; its full sequence is Small ribosomal subunit protein bS1 (391 aa).

S1 motif domains lie at 16–90 (GDKV…LSRR), 108–173 (NEII…LSRK), 194–262 (GDVI…LSIK), and 279–348 (NDDI…LSIK). The disordered stretch occupies residues 356–381 (VVESDPSTTKAYLESEEEDNPTIGDM).

Belongs to the bacterial ribosomal protein bS1 family.

In terms of biological role, binds mRNA; thus facilitating recognition of the initiation point. It is needed to translate mRNA with a short Shine-Dalgarno (SD) purine-rich sequence. The sequence is that of Small ribosomal subunit protein bS1 (rpsA) from Staphylococcus aureus (strain MRSA252).